A 240-amino-acid chain; its full sequence is Phosphoribosylaminoimidazole-succinocarboxamide synthase (240 aa).

The protein belongs to the SAICAR synthetase family.

The catalysed reaction is 5-amino-1-(5-phospho-D-ribosyl)imidazole-4-carboxylate + L-aspartate + ATP = (2S)-2-[5-amino-1-(5-phospho-beta-D-ribosyl)imidazole-4-carboxamido]succinate + ADP + phosphate + 2 H(+). It participates in purine metabolism; IMP biosynthesis via de novo pathway; 5-amino-1-(5-phospho-D-ribosyl)imidazole-4-carboxamide from 5-amino-1-(5-phospho-D-ribosyl)imidazole-4-carboxylate: step 1/2. This is Phosphoribosylaminoimidazole-succinocarboxamide synthase from Wigglesworthia glossinidia brevipalpis.